We begin with the raw amino-acid sequence, 287 residues long: 26S proteasome non-ATPase regulatory subunit 8 (287 aa).

Phosphoserine is present on Ser-43. The region spanning 99 to 268 (PSFERYMAQL…QQKPEDTTIP (170 aa)) is the PCI domain. A Glycyl lysine isopeptide (Lys-Gly) (interchain with G-Cter in SUMO2) cross-link involves residue Lys-234.

It belongs to the proteasome subunit S14 family. Component of the 19S proteasome regulatory particle complex. The 26S proteasome consists of a 20S core particle (CP) and two 19S regulatory subunits (RP). The regulatory particle is made of a lid composed of 9 subunits including PSMD8, a base containing 6 ATPases and few additional components. Interacts with DDI2. Interacts with TASOR.

Its function is as follows. Component of the 26S proteasome, a multiprotein complex involved in the ATP-dependent degradation of ubiquitinated proteins. This complex plays a key role in the maintenance of protein homeostasis by removing misfolded or damaged proteins, which could impair cellular functions, and by removing proteins whose functions are no longer required. Therefore, the proteasome participates in numerous cellular processes, including cell cycle progression, apoptosis, or DNA damage repair. The chain is 26S proteasome non-ATPase regulatory subunit 8 (PSMD8) from Bos taurus (Bovine).